An 81-amino-acid chain; its full sequence is Photosystem I iron-sulfur center (81 aa).

2 4Fe-4S ferredoxin-type domains span residues 2 to 31 (SHTVKIYDTCIGCTQCVRACPTDVLEMVPW) and 39 to 68 (IASAPRTEDCVGCKRCESACPTDFLSVRVY). [4Fe-4S] cluster-binding residues include C11, C14, C17, C21, C48, C51, C54, and C58.

In terms of assembly, the eukaryotic PSI reaction center is composed of at least 11 subunits. It depends on [4Fe-4S] cluster as a cofactor.

The protein localises to the plastid. Its subcellular location is the chloroplast thylakoid membrane. The catalysed reaction is reduced [plastocyanin] + hnu + oxidized [2Fe-2S]-[ferredoxin] = oxidized [plastocyanin] + reduced [2Fe-2S]-[ferredoxin]. Apoprotein for the two 4Fe-4S centers FA and FB of photosystem I (PSI); essential for photochemical activity. FB is the terminal electron acceptor of PSI, donating electrons to ferredoxin. The C-terminus interacts with PsaA/B/D and helps assemble the protein into the PSI complex. Required for binding of PsaD and PsaE to PSI. PSI is a plastocyanin/cytochrome c6-ferredoxin oxidoreductase, converting photonic excitation into a charge separation, which transfers an electron from the donor P700 chlorophyll pair to the spectroscopically characterized acceptors A0, A1, FX, FA and FB in turn. The protein is Photosystem I iron-sulfur center of Chlorella vulgaris (Green alga).